The sequence spans 113 residues: Large ribosomal subunit protein eL33 (113 aa).

The protein belongs to the eukaryotic ribosomal protein eL33 family.

The polypeptide is Large ribosomal subunit protein eL33 (RPL35A) (Tetrahymena thermophila (strain SB210)).